Reading from the N-terminus, the 345-residue chain is Anthranilate phosphoribosyltransferase (345 aa).

5-phospho-alpha-D-ribose 1-diphosphate-binding positions include Gly84, 87 to 88, Thr92, 94 to 97, 112 to 120, and Ser124; these read GD, NVTT, and KHGNRSVSS. Gly84 is an anthranilate binding site. Position 96 (Thr96) interacts with Mg(2+). Asn115 lines the anthranilate pocket. Arg170 provides a ligand contact to anthranilate. Residues Asp228 and Glu229 each contribute to the Mg(2+) site.

Belongs to the anthranilate phosphoribosyltransferase family. In terms of assembly, homodimer. Mg(2+) serves as cofactor.

It carries out the reaction N-(5-phospho-beta-D-ribosyl)anthranilate + diphosphate = 5-phospho-alpha-D-ribose 1-diphosphate + anthranilate. It participates in amino-acid biosynthesis; L-tryptophan biosynthesis; L-tryptophan from chorismate: step 2/5. Catalyzes the transfer of the phosphoribosyl group of 5-phosphorylribose-1-pyrophosphate (PRPP) to anthranilate to yield N-(5'-phosphoribosyl)-anthranilate (PRA). This chain is Anthranilate phosphoribosyltransferase, found in Corynebacterium aurimucosum (strain ATCC 700975 / DSM 44827 / CIP 107346 / CN-1) (Corynebacterium nigricans).